The primary structure comprises 218 residues: MKAFDRPALTAILVEGARGLSLTLSEAQITKLIDYLALMVKWNSVYNLTAVRDPLQMVTQHLLDSLAAVSAFAGAKNVLDVGAGGGLPGIVLAIWAAEAEPEMRVSLIDTVHKKTAFLTQVKAELGLANVSVHTARVEQWNAPHKFDVITSRAFAELNDFVNWSGHLLDEGGEFIALKGVAPDTEVAHLPAGWKVREVRPLQVPTLQAERHLIFIERG.

Residues glycine 82, leucine 87, 137–138 (VE), and arginine 152 contribute to the S-adenosyl-L-methionine site.

The protein belongs to the methyltransferase superfamily. RNA methyltransferase RsmG family.

It is found in the cytoplasm. It catalyses the reaction guanosine(527) in 16S rRNA + S-adenosyl-L-methionine = N(7)-methylguanosine(527) in 16S rRNA + S-adenosyl-L-homocysteine. In terms of biological role, specifically methylates the N7 position of guanine in position 527 of 16S rRNA. The chain is Ribosomal RNA small subunit methyltransferase G from Herminiimonas arsenicoxydans.